Consider the following 342-residue polypeptide: MENILDFTLEELKEWLISKEEKAFRAKQVFDWIYNKLIFDFNNMKNIPYKTKNLLSDNFYVGVPKVVKKLMSQDKNTYKFLFEYKDGNIIESVVMKYKHGNSICVSTQVGCRMGCKFCASTLDGVIRNLTSGEILSQIMAAQKEIGERISNVVLMGSGEPLDNFQNVTKFLDLVTSDTTLNIGQRHITLSTCGIVPKIKELADKNYNITLAISLHSPEDLLRKEMMPIANKYSIKELMEACDYYINKTNRRITFEYALVKGKNDSIKEAKKLSTVLKGKLCHVNLIPVNEIKENSYEKSTLKNIESFGNILKENGIETTIRREMGADINAACGQLRRSYVSK.

Catalysis depends on E91, which acts as the Proton acceptor. Positions 97 to 327 constitute a Radical SAM core domain; it reads YKHGNSICVS…TTIRREMGAD (231 aa). C104 and C332 are joined by a disulfide. Residues C111, C115, and C118 each contribute to the [4Fe-4S] cluster site. S-adenosyl-L-methionine is bound by residues 158 to 159, S190, 213 to 215, and N289; these read GE and SLH. Catalysis depends on C332, which acts as the S-methylcysteine intermediate.

Belongs to the radical SAM superfamily. RlmN family. It depends on [4Fe-4S] cluster as a cofactor.

It localises to the cytoplasm. The enzyme catalyses adenosine(2503) in 23S rRNA + 2 reduced [2Fe-2S]-[ferredoxin] + 2 S-adenosyl-L-methionine = 2-methyladenosine(2503) in 23S rRNA + 5'-deoxyadenosine + L-methionine + 2 oxidized [2Fe-2S]-[ferredoxin] + S-adenosyl-L-homocysteine. It carries out the reaction adenosine(37) in tRNA + 2 reduced [2Fe-2S]-[ferredoxin] + 2 S-adenosyl-L-methionine = 2-methyladenosine(37) in tRNA + 5'-deoxyadenosine + L-methionine + 2 oxidized [2Fe-2S]-[ferredoxin] + S-adenosyl-L-homocysteine. Functionally, specifically methylates position 2 of adenine 2503 in 23S rRNA and position 2 of adenine 37 in tRNAs. This chain is Probable dual-specificity RNA methyltransferase RlmN, found in Clostridium botulinum (strain Langeland / NCTC 10281 / Type F).